Reading from the N-terminus, the 272-residue chain is MISIDSSAMQTEAVDLANLPAQDTALEIRNLDLRYGDKQALFDVSMKIPKKQVTAFIGPSGCGKSTLLRCINRMNDLVDSCKIEGEILLHGQNIYDKKVDVAALRRNVGMVFQRPNPFPKSIYENVVYGLRLQGLSNRRDLDEAAERSLRGAAIWDEVKDRLHDNAFGLSGGQQQRLVIARAIAIEPEVLLLDEPTSALDPISTLTIEELITELKQQYTVVIVTHNMQQAARVSDQTAFMYMGELVEYADTNTIFTTPKKRKTEDYITGRYG.

The ABC transporter domain maps to 26–267 (LEIRNLDLRY…PKKRKTEDYI (242 aa)). 58 to 65 (GPSGCGKS) serves as a coordination point for ATP.

This sequence belongs to the ABC transporter superfamily. Phosphate importer (TC 3.A.1.7) family. As to quaternary structure, the complex is composed of two ATP-binding proteins (PstB), two transmembrane proteins (PstC and PstA) and a solute-binding protein (PstS).

Its subcellular location is the cell inner membrane. The enzyme catalyses phosphate(out) + ATP + H2O = ADP + 2 phosphate(in) + H(+). In terms of biological role, part of the ABC transporter complex PstSACB involved in phosphate import. Responsible for energy coupling to the transport system. This is Phosphate import ATP-binding protein PstB from Shewanella frigidimarina (strain NCIMB 400).